A 513-amino-acid chain; its full sequence is Histidine ammonia-lyase (513 aa).

Residues 144–146 (ASG) constitute a cross-link (5-imidazolinone (Ala-Gly)). 2,3-didehydroalanine (Ser) is present on S145.

It belongs to the PAL/histidase family. Post-translationally, contains an active site 4-methylidene-imidazol-5-one (MIO), which is formed autocatalytically by cyclization and dehydration of residues Ala-Ser-Gly.

Its subcellular location is the cytoplasm. The enzyme catalyses L-histidine = trans-urocanate + NH4(+). It functions in the pathway amino-acid degradation; L-histidine degradation into L-glutamate; N-formimidoyl-L-glutamate from L-histidine: step 1/3. This chain is Histidine ammonia-lyase, found in Streptococcus pyogenes serotype M5 (strain Manfredo).